We begin with the raw amino-acid sequence, 90 residues long: Large ribosomal subunit protein bL27 (90 aa).

It belongs to the bacterial ribosomal protein bL27 family.

The protein is Large ribosomal subunit protein bL27 of Paracoccus denitrificans (strain Pd 1222).